A 390-amino-acid polypeptide reads, in one-letter code: MGAFLDKPKTEKHNAHGAGNGLRYGLSSMQGWRVEMEDAHTAVVGIPHGLDNWSFFAVYDGHAGSRVANYCSTHLLEHITTNEDFRAADKSGSALEPSVESVKTGIRTGFLKIDEYMRNFSDLRNGMDRSGSTAVGVMVSPTHMYFINCGDSRAVLCRNGQVCFSTQDHKPCNPVEKERIQNAGGSVMIQRVNGSLAVSRALGDYDYKCVDGKGPTEQLVSPEPEVYEIVRAEEDEFVVLACDGIWDVMSNEELCEFVKSRLEVSDDLENVCNWVVDTCLHKGSRDNMSVVLVCFSNAPKVSEEAVKRDSELDKHLESRVEEIMQKSGEEGMPDLAHVMRILSAENIPNLPPGGGLAGKRHVIEAVYSRLNPHKDNDGGAGDLEDSLVAL.

A compositionally biased stretch (basic and acidic residues) spans 1–14; sequence MGAFLDKPKTEKHN. Residues 1 to 20 form a disordered region; sequence MGAFLDKPKTEKHNAHGAGN. Residue Gly-2 is the site of N-myristoyl glycine attachment. Residue Lys-12 forms a Glycyl lysine isopeptide (Lys-Gly) (interchain with G-Cter in ISG15) linkage. In terms of domain architecture, PPM-type phosphatase spans 23 to 295; the sequence is RYGLSSMQGW…DNMSVVLVCF (273 aa). Asp-60, Gly-61, Asp-243, and Asp-286 together coordinate Mn(2+). The segment at 371–390 is disordered; that stretch reads NPHKDNDGGAGDLEDSLVAL. The residue at position 386 (Ser-386) is a Phosphoserine.

This sequence belongs to the PP2C family. As to quaternary structure, monomer. Interacts with PAK6. Interacts with the phosphorylated form of IKBKB/IKKB. It depends on Mg(2+) as a cofactor. The cofactor is Mn(2+). In terms of processing, isgylation negatively regulates its activity. N-myristoylation is essential for the recognition of its substrates for dephosphorylation. Isoform 1: Expressed ubiquitously. Isoform 2: Expressed exclusively in testis and intestine. Isoform 3: Expressed exclusively in brain and intestine. Isoform 4: Expressed exclusively in testis and intestine.

Its subcellular location is the cytoplasm. It is found in the cytosol. The protein resides in the membrane. The catalysed reaction is O-phospho-L-seryl-[protein] + H2O = L-seryl-[protein] + phosphate. It catalyses the reaction O-phospho-L-threonyl-[protein] + H2O = L-threonyl-[protein] + phosphate. Its function is as follows. Enzyme with a broad specificity. Dephosphorylates PRKAA1 and PRKAA2. Inhibits TBK1-mediated antiviral signaling by dephosphorylating it at 'Ser-172'. Plays an important role in the termination of TNF-alpha-mediated NF-kappa-B activation through dephosphorylating and inactivating IKBKB/IKKB. This chain is Protein phosphatase 1B (Ppm1b), found in Mus musculus (Mouse).